Reading from the N-terminus, the 431-residue chain is Tyrosine--tRNA ligase (431 aa).

L-tyrosine is bound at residue Y34. The short motif at P39–H48 is the 'HIGH' region element. L-tyrosine contacts are provided by Y171 and Q175. Positions K231–T235 match the 'KMSKS' region motif. ATP is bound at residue K234. An S4 RNA-binding domain is found at I353–K422.

The protein belongs to the class-I aminoacyl-tRNA synthetase family. TyrS type 1 subfamily. As to quaternary structure, homodimer.

The protein localises to the cytoplasm. It catalyses the reaction tRNA(Tyr) + L-tyrosine + ATP = L-tyrosyl-tRNA(Tyr) + AMP + diphosphate + H(+). Its function is as follows. Catalyzes the attachment of tyrosine to tRNA(Tyr) in a two-step reaction: tyrosine is first activated by ATP to form Tyr-AMP and then transferred to the acceptor end of tRNA(Tyr). This is Tyrosine--tRNA ligase from Neisseria meningitidis serogroup A / serotype 4A (strain DSM 15465 / Z2491).